The chain runs to 123 residues: Small ribosomal subunit protein uS12cz/uS12cy (123 aa).

This sequence belongs to the universal ribosomal protein uS12 family. Part of the 30S ribosomal subunit.

It is found in the plastid. The protein resides in the chloroplast. In terms of biological role, with S4 and S5 plays an important role in translational accuracy. Located at the interface of the 30S and 50S subunits. The polypeptide is Small ribosomal subunit protein uS12cz/uS12cy (rps12-A) (Daucus carota (Wild carrot)).